The following is a 287-amino-acid chain: Formamidopyrimidine-DNA glycosylase (287 aa).

Catalysis depends on proline 2, which acts as the Schiff-base intermediate with DNA. The active-site Proton donor is the glutamate 3. The Proton donor; for beta-elimination activity role is filled by lysine 61. Positions 95, 115, and 157 each coordinate DNA. The FPG-type zinc-finger motif lies at 243-277; that stretch reads NVYGRADQPCRRCGEPVRREAFMNRSSFSCPRCQP. Arginine 267 (proton donor; for delta-elimination activity) is an active-site residue.

It belongs to the FPG family. In terms of assembly, monomer. Zn(2+) is required as a cofactor.

It carries out the reaction Hydrolysis of DNA containing ring-opened 7-methylguanine residues, releasing 2,6-diamino-4-hydroxy-5-(N-methyl)formamidopyrimidine.. The catalysed reaction is 2'-deoxyribonucleotide-(2'-deoxyribose 5'-phosphate)-2'-deoxyribonucleotide-DNA = a 3'-end 2'-deoxyribonucleotide-(2,3-dehydro-2,3-deoxyribose 5'-phosphate)-DNA + a 5'-end 5'-phospho-2'-deoxyribonucleoside-DNA + H(+). Its function is as follows. Involved in base excision repair of DNA damaged by oxidation or by mutagenic agents. Acts as a DNA glycosylase that recognizes and removes damaged bases. Has a preference for oxidized purines, such as 7,8-dihydro-8-oxoguanine (8-oxoG). Has AP (apurinic/apyrimidinic) lyase activity and introduces nicks in the DNA strand. Cleaves the DNA backbone by beta-delta elimination to generate a single-strand break at the site of the removed base with both 3'- and 5'-phosphates. The protein is Formamidopyrimidine-DNA glycosylase of Salinispora tropica (strain ATCC BAA-916 / DSM 44818 / JCM 13857 / NBRC 105044 / CNB-440).